The sequence spans 252 residues: Protein HEAT-INDUCED TAS1 TARGET 2 (252 aa).

The protein belongs to the heat induced plant HTT protein family. As to expression, expressed ubiquitously, including in seedlings, leaves, stems, inflorescences and siliques.

The protein localises to the cytoplasm. The protein resides in the nucleus. Functionally, mediates both basal and acquired thermotolerance via HSFA1s-directed pathways (e.g. HSFA1A, HSFA1B, and HSFA1D). Triggers the expression of HSFA1A and HSFA1B. This chain is Protein HEAT-INDUCED TAS1 TARGET 2, found in Arabidopsis thaliana (Mouse-ear cress).